Reading from the N-terminus, the 151-residue chain is Chaperonin GroEL (151 aa).

41–45 lines the ATP pocket; it reads DGTTT.

The protein belongs to the chaperonin (HSP60) family. As to quaternary structure, forms a cylinder of 14 subunits composed of two heptameric rings stacked back-to-back. Interacts with the co-chaperonin GroES.

It is found in the cytoplasm. The enzyme catalyses ATP + H2O + a folded polypeptide = ADP + phosphate + an unfolded polypeptide.. Together with its co-chaperonin GroES, plays an essential role in assisting protein folding. The GroEL-GroES system forms a nano-cage that allows encapsulation of the non-native substrate proteins and provides a physical environment optimized to promote and accelerate protein folding. This Mycobacteroides chelonae (Mycobacterium chelonae) protein is Chaperonin GroEL.